A 367-amino-acid polypeptide reads, in one-letter code: Glutamate 5-kinase (367 aa).

Lysine 17 is a binding site for ATP. The substrate site is built by serine 57, aspartate 144, and asparagine 156. ATP-binding positions include 176-177 (SD) and 217-223 (TGGMTSK). In terms of domain architecture, PUA spans 279-357 (AGALTLDEGA…SELPGELRRP (79 aa)).

Belongs to the glutamate 5-kinase family.

The protein localises to the cytoplasm. The enzyme catalyses L-glutamate + ATP = L-glutamyl 5-phosphate + ADP. It participates in amino-acid biosynthesis; L-proline biosynthesis; L-glutamate 5-semialdehyde from L-glutamate: step 1/2. Functionally, catalyzes the transfer of a phosphate group to glutamate to form L-glutamate 5-phosphate. The polypeptide is Glutamate 5-kinase (Mycolicibacterium paratuberculosis (strain ATCC BAA-968 / K-10) (Mycobacterium paratuberculosis)).